A 119-amino-acid polypeptide reads, in one-letter code: Small polypeptide DEVIL 24 (119 aa).

A required for DVL/RTFL small polypeptide activity region spans residues 83–114 (SFTSKCTSLMKQQHARLCIIRLCATMLLRSYT). The chain crosses the membrane as a helical span at residues 96–113 (HARLCIIRLCATMLLRSY).

Belongs to the DVL/RTFL small polypeptides family.

The protein resides in the cell membrane. Functionally, small polypeptide acting as a regulatory molecule which coordinates cellular responses required for differentiation, growth and development, probably by restricting polar cell proliferation in lateral organs and coordinating socket cell recruitment and differentiation at trichome sites. This Arabidopsis thaliana (Mouse-ear cress) protein is Small polypeptide DEVIL 24.